Here is a 101-residue protein sequence, read N- to C-terminus: Small ribosomal subunit protein bS18c (101 aa).

Over residues 1 to 19 (MDKSKQPFHKTKRSFRRRL) the composition is skewed to basic residues. Residues 1-23 (MDKSKQPFHKTKRSFRRRLPPIG) are disordered.

The protein belongs to the bacterial ribosomal protein bS18 family. In terms of assembly, part of the 30S ribosomal subunit.

Its subcellular location is the plastid. It localises to the chloroplast. The polypeptide is Small ribosomal subunit protein bS18c (Lemna minor (Common duckweed)).